The primary structure comprises 420 residues: MVDEQVAVEHGTVSHTISREEDGVVHERRVLASGERVEVFYKAPAPRPREGRASTFHDFTVPAAAAVPGPEPEPEPHPPMPIHANGGGETKTNTQDQNQNQTTRTRTNAKAEERTAEMDDTMASSGGQRGAPISADLLSLSSLTGRMAAMAPSWMKSEVCGERMRFKEDVYDGEAETLAEPPRCFMLSFVFIYYCCYLAFLALLAFGFNPLFLPSFMPVGAKVLRGKGRDFGVPLSYGCPTNPFCKVYTLIPAVVINNVTYYPNNTDSHGGHGGFEAAALHVAALFESGCPNLQAVTNRNRTFNVTRASGRVERRLVQDMQRVLASAVVVMHHHCHYETYYVFDGVGPEFGTIPTPCFKDVLAFRPSLVTNCTAPLKTSVKGPNWSGAAGGMKRKQCRVDRLTDRSFPAYLEEVMYVMVQ.

Disordered stretches follow at residues 1-21 (MVDE…SREE) and 64-129 (AAAV…GGQR). The Intravirion segment spans residues 1–184 (MVDEQVAVEH…AETLAEPPRC (184 aa)). The segment covering 90–108 (TKTNTQDQNQNQTTRTRTN) has biased composition (low complexity). Residues 185–205 (FMLSFVFIYYCCYLAFLALLA) traverse the membrane as a helical; Signal-anchor for type II membrane protein segment. Topologically, residues 206-420 (FGFNPLFLPS…LEEVMYVMVQ (215 aa)) are virion surface. Residues Asn258, Asn264, Asn300, Asn304, Asn371, and Asn384 are each glycosylated (N-linked (GlcNAc...) asparagine; by host).

Belongs to the herpesviridae BDLF2 family. Interacts with BMRF2.

It localises to the virion membrane. In terms of biological role, rearranges cellular actin to increase intercellular contacts and thereby promote virus cell-to-cell spreading. Induce the outgrowth of long, branched plasma membrane fronds to create intercellular network for virion traffic. The fronds are actin based and RhoA-dependent. The protein is Protein BDLF2 of Homo sapiens (Human).